Reading from the N-terminus, the 463-residue chain is A-type ATP synthase subunit B (463 aa).

Belongs to the ATPase alpha/beta chains family. Has multiple subunits with at least A(3), B(3), C, D, E, F, H, I and proteolipid K(x).

The protein localises to the cell membrane. Functionally, component of the A-type ATP synthase that produces ATP from ADP in the presence of a proton gradient across the membrane. The B chain is a regulatory subunit. The chain is A-type ATP synthase subunit B from Desulfurococcus sp. (strain SY).